A 344-amino-acid chain; its full sequence is Methionine import ATP-binding protein MetN (344 aa).

An ABC transporter domain is found at 2–241; that stretch reads IEINRVNKVF…PKTELARKFI (240 aa). ATP is bound at residue 38–45; that stretch reads GSSGAGKS.

The protein belongs to the ABC transporter superfamily. Methionine importer (TC 3.A.1.24) family. In terms of assembly, the complex is composed of two ATP-binding proteins (MetN), two transmembrane proteins (MetI) and a solute-binding protein (MetQ).

Its subcellular location is the cell inner membrane. The enzyme catalyses L-methionine(out) + ATP + H2O = L-methionine(in) + ADP + phosphate + H(+). The catalysed reaction is D-methionine(out) + ATP + H2O = D-methionine(in) + ADP + phosphate + H(+). Its function is as follows. Part of the ABC transporter complex MetNIQ involved in methionine import. Responsible for energy coupling to the transport system. In Photobacterium profundum (strain SS9), this protein is Methionine import ATP-binding protein MetN.